A 170-amino-acid chain; its full sequence is Shikimate kinase (170 aa).

11 to 16 (LSGKST) contacts ATP. S15 lines the Mg(2+) pocket. Substrate is bound by residues D33, R57, and G79. R119 is a binding site for ATP. R137 is a binding site for substrate.

Belongs to the shikimate kinase family. As to quaternary structure, monomer. Mg(2+) is required as a cofactor.

It localises to the cytoplasm. It carries out the reaction shikimate + ATP = 3-phosphoshikimate + ADP + H(+). Its pathway is metabolic intermediate biosynthesis; chorismate biosynthesis; chorismate from D-erythrose 4-phosphate and phosphoenolpyruvate: step 5/7. Its function is as follows. Catalyzes the specific phosphorylation of the 3-hydroxyl group of shikimic acid using ATP as a cosubstrate. This is Shikimate kinase from Clostridium botulinum (strain Loch Maree / Type A3).